Consider the following 460-residue polypeptide: tRNA-2-methylthio-N(6)-dimethylallyladenosine synthase (460 aa).

One can recognise an MTTase N-terminal domain in the interval 10 to 126; it reads GSYWITTFGC…LEVLLNRVDS (117 aa). Cys-19, Cys-55, Cys-89, Cys-161, Cys-165, and Cys-168 together coordinate [4Fe-4S] cluster. The Radical SAM core domain occupies 147–384; the sequence is RDSSICGWVN…NALVERCARE (238 aa). Residues 387 to 455 form the TRAM domain; that stretch reads ARYAGRTEEV…SFSLSGTPLP (69 aa).

This sequence belongs to the methylthiotransferase family. MiaB subfamily. In terms of assembly, monomer. [4Fe-4S] cluster serves as cofactor.

The protein localises to the cytoplasm. The enzyme catalyses N(6)-dimethylallyladenosine(37) in tRNA + (sulfur carrier)-SH + AH2 + 2 S-adenosyl-L-methionine = 2-methylsulfanyl-N(6)-dimethylallyladenosine(37) in tRNA + (sulfur carrier)-H + 5'-deoxyadenosine + L-methionine + A + S-adenosyl-L-homocysteine + 2 H(+). Catalyzes the methylthiolation of N6-(dimethylallyl)adenosine (i(6)A), leading to the formation of 2-methylthio-N6-(dimethylallyl)adenosine (ms(2)i(6)A) at position 37 in tRNAs that read codons beginning with uridine. This is tRNA-2-methylthio-N(6)-dimethylallyladenosine synthase from Parasynechococcus marenigrum (strain WH8102).